We begin with the raw amino-acid sequence, 205 residues long: Probable transcription factor Ken (205 aa).

3 consecutive C2H2-type zinc fingers follow at residues 106–128 (YRCE…LRVH), 134–157 (FACR…CSVH), and 173–196 (YSCC…SGHH).

The protein localises to the nucleus. Its function is as follows. Probable transcription factor, which is required for terminalia development. The polypeptide is Probable transcription factor Ken (ken) (Drosophila yakuba (Fruit fly)).